We begin with the raw amino-acid sequence, 883 residues long: DNA double-strand break repair Rad50 ATPase (883 aa).

ATP-binding positions include Arg12, 32–38 (NGSGKSS), and Gln134. The stretch at 218-420 (ELRGELGGLE…EIGSRRGELK (203 aa)) forms a coiled coil. The Zinc-hook domain maps to 395–492 (IQKARERKEE…ELVEVEKTLK (98 aa)). Residues Cys440 and Cys443 each coordinate Zn(2+). Coiled coils occupy residues 452–585 (RKEL…KKLG) and 620–741 (EDLL…LLKE). 790–795 (FLSGGE) provides a ligand contact to ATP.

The protein belongs to the SMC family. RAD50 subfamily. In terms of assembly, homodimer. Forms a heterotetramer composed of two Mre11 subunits and two Rad50 subunits. Zn(2+) is required as a cofactor.

Its function is as follows. Part of the Rad50/Mre11 complex, which is involved in the early steps of DNA double-strand break (DSB) repair. The complex may facilitate opening of the processed DNA ends to aid in the recruitment of HerA and NurA. Rad50 controls the balance between DNA end bridging and DNA resection via ATP-dependent structural rearrangements of the Rad50/Mre11 complex. In Thermococcus kodakarensis (strain ATCC BAA-918 / JCM 12380 / KOD1) (Pyrococcus kodakaraensis (strain KOD1)), this protein is DNA double-strand break repair Rad50 ATPase.